The sequence spans 113 residues: Protein NATD1 (113 aa).

The region spanning Glu22–Gln112 is the N-acetyltransferase domain.

It belongs to the NATD1 family.

This is Protein NATD1 (NATD1) from Homo sapiens (Human).